A 503-amino-acid chain; its full sequence is Variant surface glycoprotein AnTaT 1.1 (503 aa).

An N-terminal signal peptide occupies residues 1 to 29; the sequence is MVTKERNAALKIVMLVASALTLHPQQALA. 2 disulfide bridges follow: Cys45–Cys172 and Cys154–Cys209. Residue Asn113 is glycosylated (N-linked (GlcNAc...) asparagine). N-linked (GlcNAc...) asparagine glycans are attached at residues Asn419 and Asn432. The GPI-anchor amidated aspartate moiety is linked to residue Asp480. Positions 481–503 are cleaved as a propeptide — removed in mature form; it reads SSILLTKNFALSVVSAALVALLF.

The protein localises to the cell membrane. Functionally, VSG forms a coat on the surface of the parasite. The trypanosome evades the immune response of the host by expressing a series of antigenically distinct VSGs from an estimated 1000 VSG genes. This chain is Variant surface glycoprotein AnTaT 1.1, found in Trypanosoma brucei brucei.